The following is a 366-amino-acid chain: Chorismate synthase (366 aa).

NADP(+)-binding residues include R48 and R54. FMN is bound by residues 125–127, 237–238, G277, 292–296, and R318; these read RSS, NA, and KPTSS.

It belongs to the chorismate synthase family. In terms of assembly, homotetramer. FMNH2 is required as a cofactor.

It carries out the reaction 5-O-(1-carboxyvinyl)-3-phosphoshikimate = chorismate + phosphate. Its pathway is metabolic intermediate biosynthesis; chorismate biosynthesis; chorismate from D-erythrose 4-phosphate and phosphoenolpyruvate: step 7/7. Functionally, catalyzes the anti-1,4-elimination of the C-3 phosphate and the C-6 proR hydrogen from 5-enolpyruvylshikimate-3-phosphate (EPSP) to yield chorismate, which is the branch point compound that serves as the starting substrate for the three terminal pathways of aromatic amino acid biosynthesis. This reaction introduces a second double bond into the aromatic ring system. This Acidovorax ebreus (strain TPSY) (Diaphorobacter sp. (strain TPSY)) protein is Chorismate synthase.